We begin with the raw amino-acid sequence, 219 residues long: Ribonuclease T (219 aa).

Positions 20 to 194 (VVIDIETAGF…YDSLQTANLF (175 aa)) constitute an Exonuclease domain. Positions 23, 25, 181, and 186 each coordinate Mg(2+). The active-site Proton donor/acceptor is His-181.

It belongs to the RNase T family. In terms of assembly, homodimer. Requires Mg(2+) as cofactor.

Functionally, trims short 3' overhangs of a variety of RNA species, leaving a one or two nucleotide 3' overhang. Responsible for the end-turnover of tRNA: specifically removes the terminal AMP residue from uncharged tRNA (tRNA-C-C-A). Also appears to be involved in tRNA biosynthesis. The chain is Ribonuclease T from Buchnera aphidicola subsp. Schizaphis graminum (strain Sg).